A 305-amino-acid polypeptide reads, in one-letter code: Ribonuclease BN (305 aa).

7 residues coordinate Zn(2+): histidine 64, histidine 66, aspartate 68, histidine 69, histidine 141, aspartate 212, and histidine 270. The active-site Proton acceptor is aspartate 68.

The protein belongs to the RNase Z family. RNase BN subfamily. As to quaternary structure, homodimer. Requires Zn(2+) as cofactor.

In terms of biological role, zinc phosphodiesterase, which has both exoribonuclease and endoribonuclease activities. The protein is Ribonuclease BN of Escherichia coli O17:K52:H18 (strain UMN026 / ExPEC).